A 665-amino-acid chain; its full sequence is DNA ligase (665 aa).

NAD(+)-binding positions include 31–35 (DQEFD), 80–81 (SL), and Glu-110. Lys-112 functions as the N6-AMP-lysine intermediate in the catalytic mechanism. 4 residues coordinate NAD(+): Arg-133, Glu-170, Lys-285, and Lys-309. Cys-403, Cys-406, Cys-421, and Cys-427 together coordinate Zn(2+). Residues 587–665 (EHTDKLAGKS…SEEEFLQMIE (79 aa)) form the BRCT domain.

Belongs to the NAD-dependent DNA ligase family. LigA subfamily. Mg(2+) serves as cofactor. Requires Mn(2+) as cofactor.

It catalyses the reaction NAD(+) + (deoxyribonucleotide)n-3'-hydroxyl + 5'-phospho-(deoxyribonucleotide)m = (deoxyribonucleotide)n+m + AMP + beta-nicotinamide D-nucleotide.. DNA ligase that catalyzes the formation of phosphodiester linkages between 5'-phosphoryl and 3'-hydroxyl groups in double-stranded DNA using NAD as a coenzyme and as the energy source for the reaction. It is essential for DNA replication and repair of damaged DNA. The protein is DNA ligase of Phocaeicola vulgatus (strain ATCC 8482 / DSM 1447 / JCM 5826 / CCUG 4940 / NBRC 14291 / NCTC 11154) (Bacteroides vulgatus).